The following is a 269-amino-acid chain: Meiotically up-regulated gene 43 protein (269 aa).

The protein localises to the mitochondrion. Functionally, has a role in meiosis. The polypeptide is Meiotically up-regulated gene 43 protein (mug43) (Schizosaccharomyces pombe (strain 972 / ATCC 24843) (Fission yeast)).